We begin with the raw amino-acid sequence, 456 residues long: Glycine receptor subunit alpha-4 (456 aa).

An N-terminal signal peptide occupies residues 1 to 27 (MTTLVPASLFLLLWTLPGKVLLSVALA). At 28–256 (KEDVKSGLKG…KFHLERQMGY (229 aa)) the chain is on the extracellular side. The N-linked (GlcNAc...) asparagine glycan is linked to asparagine 71. Cystine bridges form between cysteine 171–cysteine 185 and cysteine 232–cysteine 243. Strychnine is bound at residue 236–241 (YNTGKF). A helical transmembrane segment spans residues 257–278 (YLIQMYIPSLLIVILSWVSFWI). Residues 279–283 (NMDAA) lie on the Cytoplasmic side of the membrane. The chain crosses the membrane as a helical span at residues 284 to 304 (PARVGLGITTVLTMTTQSSGS). Topologically, residues 305–315 (RASLPKVSYVK) are extracellular. The chain crosses the membrane as a helical span at residues 316-336 (AIDIWMAVCLLFVFAALLEYA). Residues 337-423 (AVNFVSRQHK…YVDRAKRIDT (87 aa)) are Cytoplasmic-facing. The helical transmembrane segment at 424–444 (ISRAVFPFTFLVFNIFYWVVY) threads the bilayer. At 445 to 456 (KVLRSEDIHQAL) the chain is on the extracellular side.

This sequence belongs to the ligand-gated ion channel (TC 1.A.9) family. Glycine receptor (TC 1.A.9.3) subfamily. GLRA4 sub-subfamily. Homopentamer (in vitro). Heteropentamer composed of GLRA4 and GLRB. Detected in the retina inner plexiform layer, especially at the border between layer three and four (at protein level).

Its subcellular location is the postsynaptic cell membrane. It localises to the synapse. The protein resides in the perikaryon. The protein localises to the cell projection. It is found in the dendrite. Its subcellular location is the cell membrane. It carries out the reaction chloride(in) = chloride(out). Its activity is regulated as follows. Inhibited by strychnine. In terms of biological role, glycine receptors are ligand-gated chloride channels. Channel opening is triggered by extracellular glycine. Channel opening is also triggered by taurine and beta-alanine. Plays a role in the down-regulation of neuronal excitability. Contributes to the generation of inhibitory postsynaptic currents. This chain is Glycine receptor subunit alpha-4 (Glra4), found in Mus musculus (Mouse).